The primary structure comprises 210 residues: Chaperone protein TorD (210 aa).

Belongs to the TorD/DmsD family. TorD subfamily.

It is found in the cytoplasm. Involved in the biogenesis of TorA. Acts on TorA before the insertion of the molybdenum cofactor and, as a result, probably favors a conformation of the apoenzyme that is competent for acquiring the cofactor. This Salmonella dublin (strain CT_02021853) protein is Chaperone protein TorD.